The chain runs to 600 residues: Malto-oligosyltrehalose trehalohydrolase (600 aa).

The interval Met-1–Ala-34 is disordered. Residue Arg-273–Pro-278 participates in substrate binding. Asp-275 functions as the Nucleophile in the catalytic mechanism. Glu-308 acts as the Proton donor in catalysis. Substrate is bound by residues Asp-328–His-332, Glu-376, and His-399–Asn-404.

It belongs to the glycosyl hydrolase 13 family. In terms of assembly, monomer.

It localises to the cytoplasm. It carries out the reaction hydrolysis of (1-&gt;4)-alpha-D-glucosidic linkage in 4-alpha-D-[(1-&gt;4)-alpha-D-glucanosyl]n trehalose to yield trehalose and (1-&gt;4)-alpha-D-glucan.. It participates in glycan biosynthesis; trehalose biosynthesis. This chain is Malto-oligosyltrehalose trehalohydrolase (treZ), found in Deinococcus radiodurans (strain ATCC 13939 / DSM 20539 / JCM 16871 / CCUG 27074 / LMG 4051 / NBRC 15346 / NCIMB 9279 / VKM B-1422 / R1).